The primary structure comprises 396 residues: Probable sugar efflux transporter (396 aa).

12 consecutive transmembrane segments (helical) span residues 15–35, 50–70, 81–101, 103–123, 136–156, 169–189, 209–229, 246–266, 275–295, 301–321, 333–353, and 364–384; these read VVTLAIAAFIFNTTEFVPVGL, VGIMLTIYAWVVAVMSLPFML, LICLFVLFIASHVLSFLAWNF, VLVISRIGIAFAHAIFWSITA, AQALSLIATGTALAMVLGLPI, TFFAIGMGALITLLCLIKLLP, PALMSLYVLTVVVVTAHYTAY, FATVLLLILGGAGIIGSLVFG, SLVSIAIALLVVCLLLLLPAA, LAILSIFWGIAIMVIGLGMQV, VAMALFSGIFNIGIGAGALVG, and AIGYIGAIPACAALVWAVLIF.

This sequence belongs to the major facilitator superfamily. SotB (TC 2.A.1.2) family.

Its subcellular location is the cell inner membrane. Its function is as follows. Involved in the efflux of sugars. The physiological role may be the reduction of the intracellular concentration of toxic sugars or sugar metabolites. The polypeptide is Probable sugar efflux transporter (Salmonella agona (strain SL483)).